The sequence spans 457 residues: MPLSLPLHIVILAAGEGKRMKSALPKVLHPIAGKPMLAHVITTARALTPDVIHVVYGHAGNQVRTAFADQTDLHWVEQTQQLGTGHAVKQTMSAIPNAANVLVLYGDVPLIRAETLQRLPRASTPIAVLVTDLANPAGYGHIVRNSEGKVAAIIEDKDADEEQRRIHTVNTGILCAESTALRRWLSKLSNTNMQGEYYLTDIFASATADLTPANMIMVTDPREVEGVNDLWQLTQLERTWQIRAARALCLQGARVADPARLDQRGTIRIGQNVHIDIDVVLEGEIELGDNVVIGPFVRLKNVKLGPGTKVHAHCDLEGVTTTGSALIGPFARLRPGTMLADGVHIGNFVETKNTSIGADSKANHLTYLGDAQIGTKVNIGAGTITCNYDGVNKSITLIGDGAFIGSHSALIAPVSVGAGATLGAGTVLTHDAPAHQLTVARARQTTLDGWQRPKKKT.

The tract at residues 1-230 is pyrophosphorylase; it reads MPLSLPLHIV…PREVEGVNDL (230 aa). UDP-N-acetyl-alpha-D-glucosamine-binding positions include 12 to 15, lysine 26, glutamine 78, 83 to 84, 105 to 107, glycine 140, glutamate 155, asparagine 170, and asparagine 228; these read LAAG, GT, and YGD. Aspartate 107 contributes to the Mg(2+) binding site. Mg(2+) is bound at residue asparagine 228. The interval 231–251 is linker; the sequence is WQLTQLERTWQIRAARALCLQ. Positions 252–457 are N-acetyltransferase; the sequence is GARVADPARL…DGWQRPKKKT (206 aa). Residues arginine 334 and lysine 352 each contribute to the UDP-N-acetyl-alpha-D-glucosamine site. Residue histidine 364 is the Proton acceptor of the active site. UDP-N-acetyl-alpha-D-glucosamine-binding residues include tyrosine 367 and asparagine 378. Residues alanine 381, 387-388, serine 406, alanine 424, and arginine 441 each bind acetyl-CoA; that span reads NY.

It in the N-terminal section; belongs to the N-acetylglucosamine-1-phosphate uridyltransferase family. In the C-terminal section; belongs to the transferase hexapeptide repeat family. In terms of assembly, homotrimer. The cofactor is Mg(2+).

It is found in the cytoplasm. It carries out the reaction alpha-D-glucosamine 1-phosphate + acetyl-CoA = N-acetyl-alpha-D-glucosamine 1-phosphate + CoA + H(+). The catalysed reaction is N-acetyl-alpha-D-glucosamine 1-phosphate + UTP + H(+) = UDP-N-acetyl-alpha-D-glucosamine + diphosphate. It functions in the pathway nucleotide-sugar biosynthesis; UDP-N-acetyl-alpha-D-glucosamine biosynthesis; N-acetyl-alpha-D-glucosamine 1-phosphate from alpha-D-glucosamine 6-phosphate (route II): step 2/2. It participates in nucleotide-sugar biosynthesis; UDP-N-acetyl-alpha-D-glucosamine biosynthesis; UDP-N-acetyl-alpha-D-glucosamine from N-acetyl-alpha-D-glucosamine 1-phosphate: step 1/1. Its pathway is bacterial outer membrane biogenesis; LPS lipid A biosynthesis. In terms of biological role, catalyzes the last two sequential reactions in the de novo biosynthetic pathway for UDP-N-acetylglucosamine (UDP-GlcNAc). The C-terminal domain catalyzes the transfer of acetyl group from acetyl coenzyme A to glucosamine-1-phosphate (GlcN-1-P) to produce N-acetylglucosamine-1-phosphate (GlcNAc-1-P), which is converted into UDP-GlcNAc by the transfer of uridine 5-monophosphate (from uridine 5-triphosphate), a reaction catalyzed by the N-terminal domain. This is Bifunctional protein GlmU from Xylella fastidiosa (strain M12).